Consider the following 621-residue polypeptide: UvrABC system protein C (621 aa).

The GIY-YIG domain occupies 21–100; that stretch reads AEPGVYLMRD…IKTYQPPYNV (80 aa). A UVR domain is found at 210-245; the sequence is DELIRELKEKMAQAAQQENYEAAARYRDQIRGLEQL.

Belongs to the UvrC family. In terms of assembly, interacts with UvrB in an incision complex.

The protein resides in the cytoplasm. In terms of biological role, the UvrABC repair system catalyzes the recognition and processing of DNA lesions. UvrC both incises the 5' and 3' sides of the lesion. The N-terminal half is responsible for the 3' incision and the C-terminal half is responsible for the 5' incision. This is UvrABC system protein C from Synechococcus sp. (strain JA-3-3Ab) (Cyanobacteria bacterium Yellowstone A-Prime).